Here is a 2551-residue protein sequence, read N- to C-terminus: Probable polyketide synthase 13 (2551 aa).

Residues 10–434 enclose the Ketosynthase family 3 (KS3) domain; sequence ENDVAIIGIG…GSNCCLILSQ (425 aa). Catalysis depends on for beta-ketoacyl synthase activity residues cysteine 176, histidine 317, and histidine 358. The acyl/malonyl transferase stretch occupies residues 621-654; that stretch reads GIEVSFIIGHSLGEIPAAYCSGMINIDTLCYLIY. Serine 631 (for acyl/malonyl transferase activity) is an active-site residue. The tract at residues 928–1057 is N-terminal hotdog fold; it reads TDNLGYLNEN…GDFQLSNHSS (130 aa). One can recognise a PKS/mFAS DH domain in the interval 928 to 1226; the sequence is TDNLGYLNEN…CTSLTPIKES (299 aa). The active-site Proton acceptor; for dehydratase activity is histidine 961. A C-terminal hotdog fold region spans residues 1076–1226; sequence NLTKLSRDEL…CTSLTPIKES (151 aa). Aspartate 1136 acts as the Proton donor; for dehydratase activity in catalysis. Residues 2465-2542 form the Carrier domain; that stretch reads DCQTIIKDSF…SSIQYTINSF (78 aa). At serine 2502 the chain carries O-(pantetheine 4'-phosphoryl)serine.

Pantetheine 4'-phosphate serves as cofactor.

Functionally, probable polyketide synthase. The polypeptide is Probable polyketide synthase 13 (pks13) (Dictyostelium discoideum (Social amoeba)).